The following is a 596-amino-acid chain: MALAGLPLSVFAIAVHFCLVFSSSSSPPVCPANGHRDRTAYHFQPAKNWQNDPNGPVYYNGMYHLFYQYNPHGALWDVGNLSWGHSVSGDLVNWAALDNALDPTAPFDANGCASGSVTILPDGVPVVMYSGIDARRRQVQNVAFPKNPRDPLLREWTKPGYNPVIPVPADVSPDNFRDPTTAWLGSDGLWRFAISAVADGVGATLVYRSADFLRWERNAAPLHASRDAVMAECPDLFPVAEHGEDGLDLDASAIGGAGAGVRHVLKVSMPDTLEDYYMVGRYDDADDTFTVPPEDLEAHGDDYRRWRRIDHGHLYASKTFYDAGKKRRVLWAWVNESDSEADDVTKGWSGLQSFPRAVWLDEGGRQLVQWPVEEIETLRRKRGVLLGGNEVEAGGLREIGGIAGSQADVEVAFEIASLAGADRLEPDHLRDPDALCGENGAAVHGGIGPFGLLVMASGDLRERTAVFFRVFRLSHGYTVLMCTDLTRSTSRAGVYKPSHGGFVDIDIEKDRAISLRTLIDHSIVESFGGGGRTCMTARVYPEHVATGSSHLYVFNNASDAVKVSKLEAWELATASVNAGDDGLISYGGPVCAAQVQ.

The N-terminal stretch at 1-25 (MALAGLPLSVFAIAVHFCLVFSSSS) is a signal peptide. Substrate-binding positions include 49 to 52 (WQND), Gln-68, and Trp-76. Asp-52 is an active-site residue. Asn-80 carries an N-linked (GlcNAc...) asparagine glycan. Residues 113 to 114 (AS), 177 to 178 (RD), and Glu-232 each bind substrate. Asn-335 carries N-linked (GlcNAc...) asparagine glycosylation. A disulfide bridge connects residues Cys-436 and Cys-482. Asn-556 carries an N-linked (GlcNAc...) asparagine glycan.

This sequence belongs to the glycosyl hydrolase 32 family. As to expression, expressed in roots. Weakly expressed in flowers.

It is found in the secreted. The protein resides in the extracellular space. Its subcellular location is the apoplast. It localises to the cell wall. The catalysed reaction is Hydrolysis of terminal non-reducing beta-D-fructofuranoside residues in beta-D-fructofuranosides.. The polypeptide is Beta-fructofuranosidase, insoluble isoenzyme 6 (CIN6) (Oryza sativa subsp. japonica (Rice)).